The following is a 389-amino-acid chain: Aromatic-amino-acid aminotransferase 2 (389 aa).

The residue at position 233 (Lys233) is an N6-(pyridoxal phosphate)lysine.

Belongs to the class-I pyridoxal-phosphate-dependent aminotransferase family. Homodimer. It depends on pyridoxal 5'-phosphate as a cofactor.

It carries out the reaction an aromatic L-alpha-amino acid + 2-oxoglutarate = an aromatic oxo-acid + L-glutamate. In terms of biological role, catalyzes the transamination of phenylalanine, tyrosine and tryptophan. Shows virtually no activity towards aspartic acid, alanine, valine or isoleucine. In Thermococcus litoralis (strain ATCC 51850 / DSM 5473 / JCM 8560 / NS-C), this protein is Aromatic-amino-acid aminotransferase 2.